The following is a 103-amino-acid chain: Large ribosomal subunit protein eL14 (103 aa).

This sequence belongs to the eukaryotic ribosomal protein eL14 family.

In Pyrobaculum neutrophilum (strain DSM 2338 / JCM 9278 / NBRC 100436 / V24Sta) (Thermoproteus neutrophilus), this protein is Large ribosomal subunit protein eL14.